The chain runs to 245 residues: Platelet-derived growth factor subunit B (245 aa).

Residues 1 to 20 (MNRCWALFLSLCCYLRLVSA) form the signal peptide. Residues 21–81 (EGDPIPEELY…ELESLSRGRR (61 aa)) constitute a propeptide, removed in mature form. N63 carries an N-linked (GlcNAc...) asparagine glycan. 3 disulfides stabilise this stretch: C101/C145, C134/C182, and C138/C184. Positions 195-245 (RSPGSSQEQRARTPQTRVTIRTVRVRRPPKGKHQKFKHTHDKKALKETLGA) are cleaved as a propeptide — removed in mature form. The span at 220–235 (RRPPKGKHQKFKHTHD) shows a compositional bias: basic residues. Positions 220–245 (RRPPKGKHQKFKHTHDKKALKETLGA) are disordered. A compositionally biased stretch (basic and acidic residues) spans 236-245 (KKALKETLGA).

Belongs to the PDGF/VEGF growth factor family. In terms of assembly, antiparallel homodimer; disulfide-linked. Antiparallel heterodimer with PDGFA; disulfide-linked. The PDGFB homodimer interacts with PDGFRA and PDGFRB homodimers, and with heterodimers formed by PDGFRA and PDGFRB. The heterodimer composed of PDGFA and PDGFB interacts with PDGFRB homodimers, and with heterodimers formed by PDGFRA and PDGFRB. Interacts with XLKD1. Interacts with LRP1. Interacts with SORL1 (via the N-terminal ectodomain). Interacts with CD82; this interaction inhibits PDGFB-mediated signaling pathway.

It localises to the secreted. Functionally, growth factor that plays an essential role in the regulation of embryonic development, cell proliferation, cell migration, survival and chemotaxis. Potent mitogen for cells of mesenchymal origin. Required for normal proliferation and recruitment of pericytes and vascular smooth muscle cells in the central nervous system, skin, lung, heart and placenta. Required for normal blood vessel development, and for normal development of kidney glomeruli. Plays an important role in wound healing. Signaling is modulated by the formation of heterodimers with PDGFA. This chain is Platelet-derived growth factor subunit B (PDGFB), found in Felis catus (Cat).